Reading from the N-terminus, the 261-residue chain is Cytochrome c oxidase subunit 3 (261 aa).

The Mitochondrial matrix segment spans residues 1-15 (MTHQTHAYHMVNPSP). The chain crosses the membrane as a helical span at residues 16 to 34 (WPLTGALSALLMTSGLAMW). Residues 35 to 40 (FHFNST) are Mitochondrial intermembrane-facing. The helical transmembrane segment at 41 to 66 (LLLALGLLTNILTMYQWWRDIIREST) threads the bilayer. Residues 67–72 (FQGHHT) lie on the Mitochondrial matrix side of the membrane. Residues 73 to 105 (SIVQKGLRYGMILFIISEVFFFSGFFWAFYHSS) traverse the membrane as a helical segment. The Mitochondrial intermembrane segment spans residues 106-128 (LAPTPELGGCWPPTGIHPLNPLE). Residues 129–152 (VPLLNTSVLLASGVSITWAHHSLM) traverse the membrane as a helical segment. At 153 to 155 (EGN) the chain is on the mitochondrial matrix side. The helical transmembrane segment at 156 to 183 (RKNMLQGLFITISLGVYFTLLQASEYYE) threads the bilayer. The Mitochondrial intermembrane segment spans residues 184 to 190 (ASFTISD). A helical membrane pass occupies residues 191-223 (GVYGSTFFVATGFHGLHVIIGSTFLIVCFLRQL). Residues 224 to 232 (KFHFTSSHH) are Mitochondrial matrix-facing. The helical transmembrane segment at 233 to 256 (FGFEAAAWYWHFVDVVWLFLYVSI) threads the bilayer. Topologically, residues 257-261 (YWWGS) are mitochondrial intermembrane.

Belongs to the cytochrome c oxidase subunit 3 family. In terms of assembly, component of the cytochrome c oxidase (complex IV, CIV), a multisubunit enzyme composed of 14 subunits. The complex is composed of a catalytic core of 3 subunits MT-CO1, MT-CO2 and MT-CO3, encoded in the mitochondrial DNA, and 11 supernumerary subunits COX4I, COX5A, COX5B, COX6A, COX6B, COX6C, COX7A, COX7B, COX7C, COX8 and NDUFA4, which are encoded in the nuclear genome. The complex exists as a monomer or a dimer and forms supercomplexes (SCs) in the inner mitochondrial membrane with NADH-ubiquinone oxidoreductase (complex I, CI) and ubiquinol-cytochrome c oxidoreductase (cytochrome b-c1 complex, complex III, CIII), resulting in different assemblies (supercomplex SCI(1)III(2)IV(1) and megacomplex MCI(2)III(2)IV(2)).

Its subcellular location is the mitochondrion inner membrane. The enzyme catalyses 4 Fe(II)-[cytochrome c] + O2 + 8 H(+)(in) = 4 Fe(III)-[cytochrome c] + 2 H2O + 4 H(+)(out). Component of the cytochrome c oxidase, the last enzyme in the mitochondrial electron transport chain which drives oxidative phosphorylation. The respiratory chain contains 3 multisubunit complexes succinate dehydrogenase (complex II, CII), ubiquinol-cytochrome c oxidoreductase (cytochrome b-c1 complex, complex III, CIII) and cytochrome c oxidase (complex IV, CIV), that cooperate to transfer electrons derived from NADH and succinate to molecular oxygen, creating an electrochemical gradient over the inner membrane that drives transmembrane transport and the ATP synthase. Cytochrome c oxidase is the component of the respiratory chain that catalyzes the reduction of oxygen to water. Electrons originating from reduced cytochrome c in the intermembrane space (IMS) are transferred via the dinuclear copper A center (CU(A)) of subunit 2 and heme A of subunit 1 to the active site in subunit 1, a binuclear center (BNC) formed by heme A3 and copper B (CU(B)). The BNC reduces molecular oxygen to 2 water molecules using 4 electrons from cytochrome c in the IMS and 4 protons from the mitochondrial matrix. The polypeptide is Cytochrome c oxidase subunit 3 (MT-CO3) (Equus asinus (Donkey)).